Consider the following 172-residue polypeptide: Small ribosomal subunit protein uS5 (172 aa).

The 64-residue stretch at 15 to 78 (YIEKLVNIRR…DKARKRMKSV (64 aa)) folds into the S5 DRBM domain.

Belongs to the universal ribosomal protein uS5 family. In terms of assembly, part of the 30S ribosomal subunit. Contacts proteins S4 and S8.

In terms of biological role, with S4 and S12 plays an important role in translational accuracy. Located at the back of the 30S subunit body where it stabilizes the conformation of the head with respect to the body. In Ruthia magnifica subsp. Calyptogena magnifica, this protein is Small ribosomal subunit protein uS5.